Here is a 115-residue protein sequence, read N- to C-terminus: NAD(P)H-quinone oxidoreductase subunit M (115 aa).

This sequence belongs to the complex I NdhM subunit family. As to quaternary structure, NDH-1 can be composed of about 15 different subunits; different subcomplexes with different compositions have been identified which probably have different functions.

Its subcellular location is the cellular thylakoid membrane. It catalyses the reaction a plastoquinone + NADH + (n+1) H(+)(in) = a plastoquinol + NAD(+) + n H(+)(out). It carries out the reaction a plastoquinone + NADPH + (n+1) H(+)(in) = a plastoquinol + NADP(+) + n H(+)(out). Its function is as follows. NDH-1 shuttles electrons from an unknown electron donor, via FMN and iron-sulfur (Fe-S) centers, to quinones in the respiratory and/or the photosynthetic chain. The immediate electron acceptor for the enzyme in this species is believed to be plastoquinone. Couples the redox reaction to proton translocation, and thus conserves the redox energy in a proton gradient. Cyanobacterial NDH-1 also plays a role in inorganic carbon-concentration. The sequence is that of NAD(P)H-quinone oxidoreductase subunit M from Prochlorococcus marinus (strain MIT 9313).